The chain runs to 286 residues: Shikimate dehydrogenase (NADP(+)) (286 aa).

Shikimate is bound by residues Ser22 to Ser24 and Thr69. The Proton acceptor role is filled by Lys73. Glu85 contributes to the NADP(+) binding site. Residues Asn94 and Asp109 each coordinate shikimate. NADP(+)-binding positions include Gly133–Ala137 and Val231. Tyr233 contributes to the shikimate binding site. Gly254 serves as a coordination point for NADP(+).

This sequence belongs to the shikimate dehydrogenase family. As to quaternary structure, homodimer.

It carries out the reaction shikimate + NADP(+) = 3-dehydroshikimate + NADPH + H(+). Its pathway is metabolic intermediate biosynthesis; chorismate biosynthesis; chorismate from D-erythrose 4-phosphate and phosphoenolpyruvate: step 4/7. Functionally, involved in the biosynthesis of the chorismate, which leads to the biosynthesis of aromatic amino acids. Catalyzes the reversible NADPH linked reduction of 3-dehydroshikimate (DHSA) to yield shikimate (SA). This chain is Shikimate dehydrogenase (NADP(+)), found in Alkaliphilus metalliredigens (strain QYMF).